Reading from the N-terminus, the 226-residue chain is Phosphoribosylformylglycinamidine synthase subunit PurQ (226 aa).

Positions 2–226 (KIAVIVFPGS…LENGTVIAEG (225 aa)) constitute a Glutamine amidotransferase type-1 domain. Cys86 (nucleophile) is an active-site residue. Residues His195 and Glu197 contribute to the active site.

In terms of assembly, part of the FGAM synthase complex composed of 1 PurL, 1 PurQ and 2 PurS subunits.

It localises to the cytoplasm. The enzyme catalyses N(2)-formyl-N(1)-(5-phospho-beta-D-ribosyl)glycinamide + L-glutamine + ATP + H2O = 2-formamido-N(1)-(5-O-phospho-beta-D-ribosyl)acetamidine + L-glutamate + ADP + phosphate + H(+). It carries out the reaction L-glutamine + H2O = L-glutamate + NH4(+). It participates in purine metabolism; IMP biosynthesis via de novo pathway; 5-amino-1-(5-phospho-D-ribosyl)imidazole from N(2)-formyl-N(1)-(5-phospho-D-ribosyl)glycinamide: step 1/2. Part of the phosphoribosylformylglycinamidine synthase complex involved in the purines biosynthetic pathway. Catalyzes the ATP-dependent conversion of formylglycinamide ribonucleotide (FGAR) and glutamine to yield formylglycinamidine ribonucleotide (FGAM) and glutamate. The FGAM synthase complex is composed of three subunits. PurQ produces an ammonia molecule by converting glutamine to glutamate. PurL transfers the ammonia molecule to FGAR to form FGAM in an ATP-dependent manner. PurS interacts with PurQ and PurL and is thought to assist in the transfer of the ammonia molecule from PurQ to PurL. The sequence is that of Phosphoribosylformylglycinamidine synthase subunit PurQ from Limosilactobacillus fermentum (strain NBRC 3956 / LMG 18251) (Lactobacillus fermentum).